A 533-amino-acid polypeptide reads, in one-letter code: Death domain-containing ATP nucleosidase (533 aa).

Residues 1–262 (MDAAAIISLL…TAAGKEEKVS (262 aa)) form a death domain region. The disordered stretch occupies residues 184–248 (STFVSDDATQ…TQTSTNSFNS (65 aa)). A compositionally biased stretch (polar residues) spans 218 to 227 (PSAQVNQPPT). Residues 236–248 (SGSTQTSTNSFNS) show a composition bias toward low complexity. Residues 263–533 (DDVTKGIKFL…HLDDDRTIHM (271 aa)) are purine nucleoside phosphorylase domain.

The catalysed reaction is ATP + H2O = D-ribose 5-triphosphate + adenine. It carries out the reaction dATP + H2O = 2-deoxyribose 5-triphosphate + adenine. The C-terminal purine nucleoside phosphorylase (PNP) domain cleaves the N-glycosidic bond of ATP, and to a lesser extent dATP, to release adenine and a sugar triphosphate; has weak activity on ADP and AMP and no activity on dADP, dAMP, adenosine, deoxyadenosine or other (d)NTPs. This chain is Death domain-containing ATP nucleosidase (109585858), found in Amphimedon queenslandica (Sponge).